The sequence spans 456 residues: Potassium voltage-gated channel subfamily A member 7 (456 aa).

A helical membrane pass occupies residues 144 to 164; sequence VLAVVSVLVILVSIVVFCLET. Asparagine 191 is a glycosylation site (N-linked (GlcNAc...) asparagine). The chain crosses the membrane as a helical span at residues 209–229; sequence FFVVETLCICWFSFELLVRLL. The S-palmitoyl cysteine moiety is linked to residue cysteine 231. Residues 241 to 261 form a helical membrane-spanning segment; it reads VMNLIDFVAILPYFVALGTEL. The helical; Voltage-sensor transmembrane segment at 276–295 threads the bilayer; it reads ILRVIRLVRVFRIFKLSRHS. A helical membrane pass occupies residues 312–332; it reads LGLLIFFLFIGVVLFSSAVYF. A Selectivity filter motif is present at residues 358 to 363; it reads TVGYGD. A helical transmembrane segment spans residues 373–393; it reads IVGSLCAIAGVLTISLPVPVI.

The protein belongs to the potassium channel family. A (Shaker) (TC 1.A.1.2) subfamily. Kv1.7/KCNA7 sub-subfamily. In terms of assembly, heterotetramer of potassium channel proteins. In terms of tissue distribution, highly expressed in skeletal muscle, heart and kidney.

The protein localises to the membrane. The catalysed reaction is K(+)(in) = K(+)(out). Mediates the voltage-dependent potassium ion permeability of excitable membranes. Assuming opened or closed conformations in response to the voltage difference across the membrane, the protein forms a potassium-selective channel through which potassium ions may pass in accordance with their electrochemical gradient. The chain is Potassium voltage-gated channel subfamily A member 7 (KCNA7) from Homo sapiens (Human).